The primary structure comprises 419 residues: Putative competence-damage inducible protein (419 aa).

Belongs to the CinA family.

In Streptococcus agalactiae serotype Ia (strain ATCC 27591 / A909 / CDC SS700), this protein is Putative competence-damage inducible protein.